The following is a 398-amino-acid chain: 8-amino-7-oxononanoate synthase (398 aa).

Substrate-binding residues include Arg-22 and Arg-29. A pyridoxal 5'-phosphate-binding site is contributed by 109 to 110; the sequence is GW. His-141 lines the substrate pocket. Pyridoxal 5'-phosphate-binding positions include Ser-189, 214–217, and 242–245; these read DEAH and TFSK. At Lys-245 the chain carries N6-(pyridoxal phosphate)lysine. Residue Thr-359 coordinates substrate.

Belongs to the class-II pyridoxal-phosphate-dependent aminotransferase family. BioF subfamily. Homodimer. It depends on pyridoxal 5'-phosphate as a cofactor.

It catalyses the reaction 6-carboxyhexanoyl-[ACP] + L-alanine + H(+) = (8S)-8-amino-7-oxononanoate + holo-[ACP] + CO2. The protein operates within cofactor biosynthesis; biotin biosynthesis. Catalyzes the decarboxylative condensation of pimeloyl-[acyl-carrier protein] and L-alanine to produce 8-amino-7-oxononanoate (AON), [acyl-carrier protein], and carbon dioxide. This is 8-amino-7-oxononanoate synthase from Gluconacetobacter diazotrophicus (strain ATCC 49037 / DSM 5601 / CCUG 37298 / CIP 103539 / LMG 7603 / PAl5).